Reading from the N-terminus, the 741-residue chain is Type VI secretion system spike protein VgrG1b (741 aa).

2 stretches are compositionally biased toward polar residues: residues 614 to 629 (SIGA…NETI) and 649 to 663 (GNQS…SRSV). A disordered region spans residues 614 to 678 (SIGANRSESV…TSVGKDDSLD (65 aa)).

It belongs to the VgrG protein family.

The protein localises to the secreted. Functionally, part of the H1 type VI secretion system (H1-T6SS) specialized secretion system, which delivers several virulence factors in both prokaryotic and eukaryotic cells during infection. Allows the delivery of the Tse7 toxin to target cells where it exerts toxicity through its nuclease domain. In Pseudomonas aeruginosa (strain ATCC 15692 / DSM 22644 / CIP 104116 / JCM 14847 / LMG 12228 / 1C / PRS 101 / PAO1), this protein is Type VI secretion system spike protein VgrG1b.